A 612-amino-acid chain; its full sequence is Bifunctional lycopene cyclase/phytoene synthase (612 aa).

Positions 1–268 are lycopene beta-cyclase; that stretch reads MGWEYAQVHL…IVFGLIACDN (268 aa). 7 helical membrane-spanning segments follow: residues 3-23, 31-51, 112-130, 148-168, 171-191, 203-223, and 246-266; these read WEYA…LAAV, LDVF…VKGL, LFFF…MILS, IAGQ…VSSG, GMYM…LWSI, NTAL…TFAL, and IEEA…LIAC. Residues 275-612 are phytoene synthase; the sequence is TFPEHFPRTK…IRVAWSALNK (338 aa).

This sequence in the N-terminal section; belongs to the lycopene beta-cyclase family. In the C-terminal section; belongs to the phytoene/squalene synthase family.

It is found in the membrane. It carries out the reaction all-trans-lycopene = gamma-carotene. The enzyme catalyses gamma-carotene = all-trans-beta-carotene. The catalysed reaction is 2 (2E,6E,10E)-geranylgeranyl diphosphate = 15-cis-phytoene + 2 diphosphate. It participates in carotenoid biosynthesis; beta-carotene biosynthesis. It functions in the pathway carotenoid biosynthesis; phytoene biosynthesis; all-trans-phytoene from geranylgeranyl diphosphate: step 1/1. Bifunctional enzyme; part of the car gene cluster that mediates the biosynthesis of neurosporaxanthin, a carboxylic apocarotenoid acting as an essential protective pigments and leading to orange pigmentation. CarAR catalyzes the first step of the pathway by converting geranylgeranyl diphosphate to phytoene, as well as the later cyclization step that transforms the carB product lycopene into gamma-carotene. CarAR also converts part of gamma-carotene into beta-carotene. Neurosporaxanthin is synthesized from geranyl-geranyl pyrophosphate (GGPP) through several enzymatic activities. Phytoene synthase activity performed by the bifunctional enzyme carAR first produces phytoene from geranyl-geranyl pyrophosphate (GGPP). The phytoene dehydrogenase carB then introduces 4 desaturations to lead to lycopene which is substrate of the carotene cyclase activity of carAR that leads to the production of gamma-carotene. CarB then performs a 5th desaturation reaction to yield torulene. Torulene is the substrate of the dioxidase carT that breaks the molecule, removing five carbon atoms to yield beta-apo-4'-carotenal, whereas the aldehyde dehydrogenase carD mediates the last step by converting beta-apo-4'-carotenal into neurosporaxanthin. The polypeptide is Bifunctional lycopene cyclase/phytoene synthase (Fusarium fujikuroi (Bakanae and foot rot disease fungus)).